A 312-amino-acid chain; its full sequence is Phosphoribosylaminoimidazole-succinocarboxamide synthase (312 aa).

The protein belongs to the SAICAR synthetase family.

It carries out the reaction 5-amino-1-(5-phospho-D-ribosyl)imidazole-4-carboxylate + L-aspartate + ATP = (2S)-2-[5-amino-1-(5-phospho-beta-D-ribosyl)imidazole-4-carboxamido]succinate + ADP + phosphate + 2 H(+). It participates in purine metabolism; IMP biosynthesis via de novo pathway; 5-amino-1-(5-phospho-D-ribosyl)imidazole-4-carboxamide from 5-amino-1-(5-phospho-D-ribosyl)imidazole-4-carboxylate: step 1/2. The protein is Phosphoribosylaminoimidazole-succinocarboxamide synthase of Legionella pneumophila (strain Paris).